A 373-amino-acid chain; its full sequence is Ca(2+)/H(+) antiporter (373 aa).

11 helical membrane-spanning segments follow: residues 6–26 (TIFF…WLHW), 29–49 (VSIF…MGEA), 61–81 (LGGL…AFIA), 94–114 (ITGS…LLGG), 134–154 (MNLA…SNGI), 162–182 (LSVA…LFSM), 220–240 (FWLG…ELLV), 249–269 (SLGL…GNAA), 291–311 (VGST…AGWI), 318–338 (LDFN…ANSI), and 349–369 (GSLL…HPVV).

This sequence belongs to the Ca(2+):cation antiporter (CaCA) (TC 2.A.19) family. Cation/proton exchanger (CAX) subfamily.

The protein localises to the cell inner membrane. Ca(+)/H(+) antiporter that extrudes calcium in exchange for external protons. Plays an important role in salt tolerance. Does not transport sodium or lithium. This chain is Ca(2+)/H(+) antiporter, found in Aphanothece halophytica.